The sequence spans 419 residues: L-rhamnose isomerase (419 aa).

Positions 262, 294, and 296 each coordinate Mn(2+).

This sequence belongs to the rhamnose isomerase family. Homotetramer. Mn(2+) serves as cofactor.

It is found in the cytoplasm. The catalysed reaction is L-rhamnopyranose = L-rhamnulose. Its pathway is carbohydrate degradation; L-rhamnose degradation; glycerone phosphate from L-rhamnose: step 1/3. Its function is as follows. Catalyzes the interconversion of L-rhamnose and L-rhamnulose. The protein is L-rhamnose isomerase of Citrobacter koseri (strain ATCC BAA-895 / CDC 4225-83 / SGSC4696).